Here is a 525-residue protein sequence, read N- to C-terminus: Ribosomal protein S6 kinase beta-1 (525 aa).

The short motif at 28–32 (FDIDL) is the TOS motif element. The span at 32-46 (LDQPEDAGSEDELEE) shows a compositional bias: acidic residues. The disordered stretch occupies residues 32-54 (LDQPEDAGSEDELEEGGQLNESM). Residues 91–352 (FELLRVLGKG…AGEVQAHPFF (262 aa)) enclose the Protein kinase domain. Residues 97–105 (LGKGGYGKV) and K123 each bind ATP. The active-site Proton acceptor is the D218. Position 252 is a phosphothreonine; by PDPK1 (T252). The region spanning 353–423 (RHINWEELLA…VAPSVLESVK (71 aa)) is the AGC-kinase C-terminal domain. The disordered stretch occupies residues 380 to 399 (SQFDSKFTRQTPVDSPDDST). The segment covering 381–399 (QFDSKFTRQTPVDSPDDST) has biased composition (polar residues). S394 carries the post-translational modification Phosphoserine. T412 carries the post-translational modification Phosphothreonine; by MTOR, NEK6 and NEK7. Residues 424–525 (EKFSFEPKIR…KRPEHLRMNL (102 aa)) form an autoinhibitory domain region. A phosphoserine mark is found at S434 and S441. Residue T444 is modified to Phosphothreonine. 2 positions are modified to phosphoserine: S447 and S452. Position 516 is an N6-acetyllysine (K516).

The protein belongs to the protein kinase superfamily. AGC Ser/Thr protein kinase family. S6 kinase subfamily. As to quaternary structure, interacts with PPP1R9A/neurabin-1. Interacts with RPTOR. Interacts with IRS1. Interacts with EIF3B and EIF3C. Interacts with TRAF4. Interacts with POLDIP3. Interacts (via N-terminus) with IER5. Phosphorylation at Thr-412 is regulated by mTORC1. The phosphorylation at this site is maintained by an agonist-dependent autophosphorylation mechanism. Activated by phosphorylation at Thr-252 by PDPK1. Dephosphorylation by PPP1CC at Thr-412 in mitochondrion.

The protein resides in the cytoplasm. The protein localises to the synapse. Its subcellular location is the synaptosome. It localises to the mitochondrion outer membrane. It is found in the mitochondrion. It catalyses the reaction L-seryl-[protein] + ATP = O-phospho-L-seryl-[protein] + ADP + H(+). The catalysed reaction is L-threonyl-[protein] + ATP = O-phospho-L-threonyl-[protein] + ADP + H(+). Activation requires multiple phosphorylation events on serine/threonine residues. Activation appears to be first mediated by phosphorylation of multiple sites in the autoinhibitory domain, which facilitates phosphorylation at Thr-412, disrupting the autoinhibitory mechanism and allowing phosphorylation of Thr-252 by PDPK1. The active conformation of the kinase is believed to be stabilized by a mechanism involving three conserved phosphorylation sites located in the kinase domain activation loop (Thr-252) and in the AGC-kinase C-terminal domain (Ser-394 in the middle of the tail/linker region and Thr-412 within a hydrophobic motif at its end). Activated by mTORC1; isoform Alpha I and isoform Alpha II are sensitive to rapamycin, which inhibits activating phosphorylation at Thr-412. Activated by PDPK1. Its function is as follows. Serine/threonine-protein kinase that acts downstream of mTOR signaling in response to growth factors and nutrients to promote cell proliferation, cell growth and cell cycle progression. Regulates protein synthesis through phosphorylation of EIF4B, RPS6 and EEF2K, and contributes to cell survival by repressing the pro-apoptotic function of BAD. Under conditions of nutrient depletion, the inactive form associates with the EIF3 translation initiation complex. Upon mitogenic stimulation, phosphorylation by the mechanistic target of rapamycin complex 1 (mTORC1) leads to dissociation from the EIF3 complex and activation. The active form then phosphorylates and activates several substrates in the pre-initiation complex, including the EIF2B complex and the cap-binding complex component EIF4B. Also controls translation initiation by phosphorylating a negative regulator of EIF4A, PDCD4, targeting it for ubiquitination and subsequent proteolysis. Promotes initiation of the pioneer round of protein synthesis by phosphorylating POLDIP3/SKAR. In response to IGF1, activates translation elongation by phosphorylating EEF2 kinase (EEF2K), which leads to its inhibition and thus activation of EEF2. Also plays a role in feedback regulation of mTORC2 by mTORC1 by phosphorylating MAPKAP1/SIN1, MTOR and RICTOR, resulting in the inhibition of mTORC2 and AKT1 signaling. Also involved in feedback regulation of mTORC1 and mTORC2 by phosphorylating DEPTOR. Mediates cell survival by phosphorylating the pro-apoptotic protein BAD and suppressing its pro-apoptotic function. Phosphorylates mitochondrial URI1 leading to dissociation of a URI1-PPP1CC complex. The free mitochondrial PPP1CC can then dephosphorylate RPS6KB1 at Thr-412, which is proposed to be a negative feedback mechanism for the RPS6KB1 anti-apoptotic function. Mediates TNF-alpha-induced insulin resistance by phosphorylating IRS1 at multiple serine residues, resulting in accelerated degradation of IRS1. In cells lacking functional TSC1-2 complex, constitutively phosphorylates and inhibits GSK3B. May be involved in cytoskeletal rearrangement through binding to neurabin. Phosphorylates and activates the pyrimidine biosynthesis enzyme CAD, downstream of MTOR. Following activation by mTORC1, phosphorylates EPRS and thereby plays a key role in fatty acid uptake by adipocytes and also most probably in interferon-gamma-induced translation inhibition. The chain is Ribosomal protein S6 kinase beta-1 (Rps6kb1) from Mus musculus (Mouse).